A 299-amino-acid chain; its full sequence is MKREEIADLMAFVVVAEERSFTRAAARLSMAQSALSQIVRRIEERLGLRLLTRTTRSVVPTEAGEHLLSVLGPMLHDIDSAMASLSDLQNRPSGTIRITTVEHAAKTILLPAMRTFLKSHPEIDIQLTIDYGLTDVVSERFDAGVRLGGEMDKDMIAIRIGPDIPMAIVGSPDYFSRRSVPTSVSQLIDHQAINLYLPTSGTANRWRLIRGGREVRVRMEGQLLLNTIDLIIDAAIDGHGLAYLPYDQVERAIKEKKLIRVLDKFTPDLPGYHLYYPHRRHAGSAFSLFIDRLKYKGAV.

One can recognise an HTH lysR-type domain in the interval 4–61; that stretch reads EEIADLMAFVVVAEERSFTRAAARLSMAQSALSQIVRRIEERLGLRLLTRTTRSVVPT. The segment at residues 21–40 is a DNA-binding region (H-T-H motif); it reads FTRAAARLSMAQSALSQIVR.

It belongs to the LysR transcriptional regulatory family.

Regulates the expression of genes involved in peptidoglycan (PG) degradation. Could play a role in switch control between recycling and degradation of PG peptides. Negatively regulates the expression of the ycjY-ymjD-ymjC-mpaA operon by binding to the PgrR-box. In addition, other genes are predicted to be under the control of PgrR, including genes related to membrane formation and function. In Escherichia coli (strain K12), this protein is HTH-type transcriptional regulator PgrR (pgrR).